The primary structure comprises 244 residues: Derlin-2.2 (244 aa).

Residues 1–21 (MAQAVEEWYKQMPIITRSYLT) are Cytoplasmic-facing. Residues 22–42 (AAVITTVGCSLDIISPYNLYL) traverse the membrane as a helical segment. Topologically, residues 43–96 (NPTLVVKQYQYWRLVTNFLYFRKMDLDFMFHMFFLARYCKLLEENSFRGKTADF) are lumenal. The helical transmembrane segment at 97–117 (LYMLLFGASVLTGIVLIGGMI) threads the bilayer. Over 118-121 (PYLS) the chain is Cytoplasmic. Residues 122–142 (ASFAKIIFLSNSLTFMMVYVW) traverse the membrane as a helical segment. At 143-152 (SKQNPYIHMS) the chain is on the lumenal side. The helical transmembrane segment at 153–173 (FLGLFTFTAAYLPWVLLGFSI) threads the bilayer. Over 174-244 (LVGASAWVDL…AAPFDEIHQD (71 aa)) the chain is Cytoplasmic.

The protein belongs to the derlin family.

It localises to the endoplasmic reticulum membrane. In terms of biological role, may be involved in the degradation process of specific misfolded endoplasmic reticulum (ER) luminal proteins. This is Derlin-2.2 (DER2.2) from Arabidopsis thaliana (Mouse-ear cress).